A 588-amino-acid chain; its full sequence is Aspartate--tRNA ligase (588 aa).

Position 177 (E177) interacts with L-aspartate. The segment at 201–204 (QLFK) is aspartate. R223 is a binding site for L-aspartate. Residues 223–225 (RDE) and Q232 each bind ATP. Residue H451 coordinates L-aspartate. Residue E485 participates in ATP binding. R492 is an L-aspartate binding site. An ATP-binding site is contributed by 537-540 (GLDR).

It belongs to the class-II aminoacyl-tRNA synthetase family. Type 1 subfamily. As to quaternary structure, homodimer.

It localises to the cytoplasm. It catalyses the reaction tRNA(Asp) + L-aspartate + ATP = L-aspartyl-tRNA(Asp) + AMP + diphosphate. Its function is as follows. Catalyzes the attachment of L-aspartate to tRNA(Asp) in a two-step reaction: L-aspartate is first activated by ATP to form Asp-AMP and then transferred to the acceptor end of tRNA(Asp). The protein is Aspartate--tRNA ligase of Staphylococcus aureus (strain NCTC 8325 / PS 47).